The primary structure comprises 1368 residues: DNA-directed RNA polymerase subunit beta (1368 aa).

It belongs to the RNA polymerase beta chain family. As to quaternary structure, the RNAP catalytic core consists of 2 alpha, 1 beta, 1 beta' and 1 omega subunit. When a sigma factor is associated with the core the holoenzyme is formed, which can initiate transcription.

The catalysed reaction is RNA(n) + a ribonucleoside 5'-triphosphate = RNA(n+1) + diphosphate. Its function is as follows. DNA-dependent RNA polymerase catalyzes the transcription of DNA into RNA using the four ribonucleoside triphosphates as substrates. The sequence is that of DNA-directed RNA polymerase subunit beta from Cupriavidus pinatubonensis (strain JMP 134 / LMG 1197) (Cupriavidus necator (strain JMP 134)).